A 370-amino-acid polypeptide reads, in one-letter code: Myomodulin neuropeptides 1 (370 aa).

The signal sequence occupies residues M1–Q18. A propeptide spanning residues G19–A50 is cleaved from the precursor. Low complexity predominate over residues Q28–S40. The segment at Q28–R52 is disordered. A leucine amide mark is found at L60 and L69. Positions G73–E190 are excised as a propeptide. L199 and L209 each carry leucine amide. The segment covering G210–E226 has biased composition (basic and acidic residues). The segment at G210 to D230 is disordered. A propeptide spanning residues E213–I237 is cleaved from the precursor. L246, L256, L266, L276, L286, L296, L306, L316, L326, L336, and L346 each carry leucine amide. Residues L344–Q370 are disordered. The span at G347–S358 shows a compositional bias: basic and acidic residues. Residues D350 to E355 constitute a propeptide that is removed on maturation. The residue at position 364 (L364) is a Leucine amide. Positions S368–Q370 are excised as a propeptide.

Expressed in all ganglia of the CNS, but only in a subset of neurons including L10 in the abdominal ganglion and B16 in the buccal ganglion.

The protein localises to the secreted. In terms of biological role, exogenous application of myomodulins potentiates ARC muscle contraction. This Aplysia californica (California sea hare) protein is Myomodulin neuropeptides 1 (MYOMOD1).